Consider the following 86-residue polypeptide: ATP synthase subunit c (86 aa).

Transmembrane regions (helical) follow at residues 13-33 (FFATGLAYLGAGISILAAGLA) and 63-83 (ILGQAMVETSGIYALIIAFIL).

The protein belongs to the ATPase C chain family. As to quaternary structure, F-type ATPases have 2 components, F(1) - the catalytic core - and F(0) - the membrane proton channel. F(1) has five subunits: alpha(3), beta(3), gamma(1), delta(1), epsilon(1). F(0) has three main subunits: a(1), b(2) and c(10-14). The alpha and beta chains form an alternating ring which encloses part of the gamma chain. F(1) is attached to F(0) by a central stalk formed by the gamma and epsilon chains, while a peripheral stalk is formed by the delta and b chains.

The protein localises to the cell membrane. Functionally, f(1)F(0) ATP synthase produces ATP from ADP in the presence of a proton or sodium gradient. F-type ATPases consist of two structural domains, F(1) containing the extramembraneous catalytic core and F(0) containing the membrane proton channel, linked together by a central stalk and a peripheral stalk. During catalysis, ATP synthesis in the catalytic domain of F(1) is coupled via a rotary mechanism of the central stalk subunits to proton translocation. In terms of biological role, key component of the F(0) channel; it plays a direct role in translocation across the membrane. A homomeric c-ring of between 10-14 subunits forms the central stalk rotor element with the F(1) delta and epsilon subunits. The chain is ATP synthase subunit c from Acholeplasma laidlawii (strain PG-8A).